The primary structure comprises 355 residues: Peptide chain release factor 1 (355 aa).

Glutamine 230 carries the N5-methylglutamine modification.

This sequence belongs to the prokaryotic/mitochondrial release factor family. Methylated by PrmC. Methylation increases the termination efficiency of RF1.

The protein resides in the cytoplasm. Functionally, peptide chain release factor 1 directs the termination of translation in response to the peptide chain termination codons UAG and UAA. This chain is Peptide chain release factor 1, found in Geotalea uraniireducens (strain Rf4) (Geobacter uraniireducens).